The following is a 529-amino-acid chain: Kunitz-type protease inhibitor 1 (529 aa).

A signal peptide spans 1-35 (MAPARTMARARLAPAGIPAVALWLLCTLGLQGTQA). In terms of domain architecture, MANSC spans 57–140 (GVPGFVLDTN…FAPREGFINY (84 aa)). N-linked (GlcNAc...) asparagine glycans are attached at residues N66 and N235. One can recognise a BPTI/Kunitz inhibitor 1 domain in the interval 250 to 300 (CLASNKVGRCRGSFPRWYYDPTEQICKSFVYGGCLGNKNNYLREEECILAC). 9 disulfide bridges follow: C250–C300, C259–C283, C275–C296, C335–C347, C342–C360, C354–C369, C391–C441, C400–C424, and C416–C437. The 37-residue stretch at 334-370 (TCQPTQFRCSNGCCIDSFLECDDTPNCPDASDEAACE) folds into the LDL-receptor class A domain. One can recognise a BPTI/Kunitz inhibitor 2 domain in the interval 391-441 (CVDLPDTGLCKESIPRWYYNPFSEHCARFTYGGCYGNKNNFEEEQQCLESC). A glycan (N-linked (GlcNAc...) asparagine) is linked at N523.

As to quaternary structure, interacts with HGFAC. Interacts with TMPRSS13; the interaction promotes the phosphorylation and cell membrane localization of TMPRSS13.

It localises to the secreted. The protein localises to the cytoplasm. Its subcellular location is the cell membrane. In terms of biological role, inhibitor of HGFAC. Inhibits serine protease activity of ST14/matriptase in vitro. Inhibits serine protease activity of TMPRSS13, via the BPTI/Kunitz inhibitor 1 domain. The sequence is that of Kunitz-type protease inhibitor 1 (SPINT1) from Homo sapiens (Human).